A 237-amino-acid polypeptide reads, in one-letter code: Small ribosomal subunit protein uS5 (237 aa).

The segment at 1–59 is disordered; it reads MADETNLEGVAAVEATGGEPQREGRGRGRGRGGNDRGGERGGRGRRDDRRGRGNNDEEG. Over residues 20-55 the composition is skewed to basic and acidic residues; it reads PQREGRGRGRGRGGNDRGGERGGRGRRDDRRGRGNN. The region spanning 63 to 126 is the S5 DRBM domain; sequence LIEKLVHINR…AAAKRAMVRV (64 aa).

Belongs to the universal ribosomal protein uS5 family. Part of the 30S ribosomal subunit. Contacts proteins S4 and S8.

Functionally, with S4 and S12 plays an important role in translational accuracy. In terms of biological role, located at the back of the 30S subunit body where it stabilizes the conformation of the head with respect to the body. The sequence is that of Small ribosomal subunit protein uS5 from Novosphingobium aromaticivorans (strain ATCC 700278 / DSM 12444 / CCUG 56034 / CIP 105152 / NBRC 16084 / F199).